The chain runs to 718 residues: DNA ligase (718 aa).

Residues 34–38 (DAEYD), 83–84 (SL), and Glu-115 each bind NAD(+). Lys-117 serves as the catalytic N6-AMP-lysine intermediate. Residues Arg-138, Glu-186, Lys-302, and Lys-326 each contribute to the NAD(+) site. Zn(2+) contacts are provided by Cys-420, Cys-423, Cys-438, and Cys-444. Residues 604-694 (PKGDALAGKT…DRSAPAASNN (91 aa)) enclose the BRCT domain.

This sequence belongs to the NAD-dependent DNA ligase family. LigA subfamily. Requires Mg(2+) as cofactor. Mn(2+) serves as cofactor.

It catalyses the reaction NAD(+) + (deoxyribonucleotide)n-3'-hydroxyl + 5'-phospho-(deoxyribonucleotide)m = (deoxyribonucleotide)n+m + AMP + beta-nicotinamide D-nucleotide.. DNA ligase that catalyzes the formation of phosphodiester linkages between 5'-phosphoryl and 3'-hydroxyl groups in double-stranded DNA using NAD as a coenzyme and as the energy source for the reaction. It is essential for DNA replication and repair of damaged DNA. The chain is DNA ligase from Roseiflexus castenholzii (strain DSM 13941 / HLO8).